Reading from the N-terminus, the 1056-residue chain is PAX-interacting protein 1 (1056 aa).

BRCT domains lie at 8–93 (VPEE…GFSP) and 94–183 (ESCQ…FYHP). The interaction with PAGR1 stretch occupies residues 94-183 (ESCQIFFGLT…RRKDEAFYHP (90 aa)). The span at 188 to 205 (YEEEEEEEEEGDNEEQDS) shows a compositional bias: acidic residues. Disordered stretches follow at residues 188–276 (YEEE…QRRL), 393–412 (THVL…HPAL), and 419–486 (MQLQ…FQQQ). The segment covering 214–223 (SSVASSAVAS) has biased composition (low complexity). A phosphoserine mark is found at S223 and S230. 3 stretches are compositionally biased toward low complexity: residues 396-412 (LQQH…HPAL), 419-435 (MQLQ…QQQP), and 445-486 (QFPQ…FQQQ). The tract at residues 577–1056 (QLFGHDPAVE…TLDYESYKFN (480 aa)) is interaction with TP53BP1. BRCT domains follow at residues 588–681 (PEES…RALH), 688–776 (PGGK…VQYS), 853–934 (TPLV…NYIL), and 955–989 (HVSP…GGKV). The Nuclear localization signal signature appears at 655 to 672 (RKRCVTAHWLNTVLKKKK).

Interacts with the C-terminal transactivation domain of PAX2. Forms a constitutive complex with PAGR1 independently of the MLL2/MLL3 complex. Interacts with TP53BP1 (when phosphorylated at the N-terminus by ATM). Interacts with HLTF. Component of the KMT2 family MLL2/MLL3 complex (also named ASCOM complex), at least composed of the HMTs KMT2D and/or KMT2C, the common subunits ASH2L, RBBP5, WDR5 and DPY30, and the complex type-specific subunits PAXIP1/PTIP, PAGR1, NCOA6 and KDM6A; required for the association of PAGR1 with the MLL2/MLL3 complex. Interacts with NUPR1; this interaction prevents PAXIP1 inhibition of PAX2 transcription factor activity. Expression detected in all tissues examined, including brain stem, cerebellum, cortex, heart, spleen, kidney, liver, thymus and lung.

Its subcellular location is the nucleus matrix. The protein localises to the chromosome. Involved in DNA damage response and in transcriptional regulation through histone methyltransferase (HMT) complexes such as the MLL2/MLL3 complex. Plays a role in early development. In DNA damage response is required for cell survival after ionizing radiation. In vitro shown to be involved in the homologous recombination mechanism for the repair of double-strand breaks (DSBs). Its localization to DNA damage foci requires Rnf8 and Ube2n. Recruits Tp53bp1 to DNA damage foci and, at least in particular repair processes, effective DNA damage response appears to require the association with Tp53bp1 phosphorylated by Atm. Together with Tp53bp1 regulates Atm association. Proposed to recruit Pagr1 to sites of DNA damage and the Pagr1:Paxip1 complex is required for cell survival in response to DNA damage independently of the MLL2/MLL3 complex. However, this function has been questioned. Promotes ubiquitination of PCNA following UV irradiation and may regulate recruitment of polymerase eta and Rad51 to chromatin after DNA damage. Proposed to be involved in transcriptional regulation by linking MLL-containing histone methyltransferase (HMT) complexes to gene promoters by interacting with promoter-bound transcription factors such as Pax2. Associates with gene promoters that are known to be regulated by Kmt2d/Mll2. During immunoglobulin class switching in activated B-cells is involved in trimethylation of histone H3 at 'Lys-4' and in transcription initiation of downstream switch regions at the immunoglobulin heavy-chain (Igh) locus; this function appears to involve the recruitment of MLL-containing HMT complexes. Conflictingly, its function in transcriptional regulation during immunoglobulin class switching is reported to be independent of the MLL2/MLL3 complex. The protein is PAX-interacting protein 1 (Paxip1) of Mus musculus (Mouse).